The primary structure comprises 401 residues: Phosphonopyruvate decarboxylase (401 aa).

Positions 382 to 401 (WPASAVGSGTRAAAGSAGDR) are disordered. A compositionally biased stretch (low complexity) spans 384–401 (ASAVGSGTRAAAGSAGDR).

This sequence belongs to the TPP enzyme family. Thiamine diphosphate is required as a cofactor. Mg(2+) serves as cofactor.

The catalysed reaction is 3-phosphonopyruvate + H(+) = phosphonoacetaldehyde + CO2. It participates in secondary metabolite biosynthesis; bialaphos biosynthesis. In terms of biological role, involved in the biosynthesis of phosphinothricin tripeptide (PTT), also known as bialaphos (BA), a natural-product antibiotic and potent herbicide. Catalyzes the decarboxylation of phosphonopyruvate (PnPy) to generate phosphonoacetaldehyde (PnAA). The polypeptide is Phosphonopyruvate decarboxylase (Streptomyces hygroscopicus).